The primary structure comprises 278 residues: Large ribosomal subunit protein uL2 (278 aa).

Residues 222–278 (GVVMNPVDHPHGGGEGRTSGGRHPVTPWGKPTKGAKTRKNKSTDKFIIRSRHERKKR) form a disordered region. Basic residues predominate over residues 269-278 (IRSRHERKKR).

It belongs to the universal ribosomal protein uL2 family. In terms of assembly, part of the 50S ribosomal subunit. Forms a bridge to the 30S subunit in the 70S ribosome.

Functionally, one of the primary rRNA binding proteins. Required for association of the 30S and 50S subunits to form the 70S ribosome, for tRNA binding and peptide bond formation. It has been suggested to have peptidyltransferase activity; this is somewhat controversial. Makes several contacts with the 16S rRNA in the 70S ribosome. The polypeptide is Large ribosomal subunit protein uL2 (Maricaulis maris (strain MCS10) (Caulobacter maris)).